A 268-amino-acid chain; its full sequence is Syntaxin-22 (268 aa).

A disordered region spans residues M1 to D23. Position 2 is an N-acetylserine (S2). The Cytoplasmic segment spans residues S2–S246. The t-SNARE coiled-coil homology domain maps to E175–A237. A helical; Anchor for type IV membrane protein transmembrane segment spans residues L247–A267. A268 is a topological domain (vesicular).

It belongs to the syntaxin family. In terms of assembly, interacts with VTI11 and SYP51 to form a t-SNARE complex, but not with VPS45. In terms of tissue distribution, expressed in roots, leaves, stems, flower and green siliques.

The protein localises to the prevacuolar compartment membrane. The protein resides in the vacuole membrane. Functionally, may provide the t-SNARE function in the vacuolar assembly. Promotes the formation of vacuolar membrane 'bulbs'. Required for inflorescence stem gravitropism. This chain is Syntaxin-22 (SYP22), found in Arabidopsis thaliana (Mouse-ear cress).